Consider the following 286-residue polypeptide: Lipid phosphate phosphatase epsilon 2, chloroplastic (286 aa).

The transit peptide at 1–60 (MAASSSSLLLLHKPTYNFHFAASSVPTYINSARFRISSSIFPLDRRRRRRIWSVSGFKSM) directs the protein to the chloroplast. The next 5 helical transmembrane spans lie at 133 to 149 (LWAV…SVAL), 173 to 193 (AQSI…WLGT), 194 to 214 (NVLS…FTWL), 226 to 246 (VVVG…TWNS), and 260 to 280 (IALF…VLLN).

This sequence belongs to the PA-phosphatase related phosphoesterase family. In terms of tissue distribution, expressed in root tips, root branch points, cotyledons and leaves.

The protein resides in the plastid. Its subcellular location is the chloroplast inner membrane. With respect to regulation, inhibited by Mg(2+). In terms of biological role, exhibits phosphatidate phosphatase (PAP) activity in vitro. May play a secondary role as PAP in plastids. The chain is Lipid phosphate phosphatase epsilon 2, chloroplastic (LPPE2) from Arabidopsis thaliana (Mouse-ear cress).